The sequence spans 274 residues: Rhamnulose-1-phosphate aldolase (274 aa).

Residue Glu117 is part of the active site. 3 residues coordinate Zn(2+): His141, His143, and His212.

The protein belongs to the aldolase class II family. RhaD subfamily. As to quaternary structure, homotetramer. The cofactor is Zn(2+).

The protein localises to the cytoplasm. The catalysed reaction is L-rhamnulose 1-phosphate = (S)-lactaldehyde + dihydroxyacetone phosphate. It participates in carbohydrate degradation; L-rhamnose degradation; glycerone phosphate from L-rhamnose: step 3/3. Catalyzes the reversible cleavage of L-rhamnulose-1-phosphate to dihydroxyacetone phosphate (DHAP) and L-lactaldehyde. This is Rhamnulose-1-phosphate aldolase from Escherichia coli O7:K1 (strain IAI39 / ExPEC).